The primary structure comprises 282 residues: Pantothenate synthetase (282 aa).

30-37 (MGALHAGH) provides a ligand contact to ATP. Residue H37 is the Proton donor of the active site. Q61 is a (R)-pantoate binding site. Beta-alanine is bound at residue Q61. An ATP-binding site is contributed by 147–150 (GEKD). Q153 is a binding site for (R)-pantoate. ATP contacts are provided by residues V176 and 184–187 (LSSR).

The protein belongs to the pantothenate synthetase family. Homodimer.

The protein localises to the cytoplasm. It catalyses the reaction (R)-pantoate + beta-alanine + ATP = (R)-pantothenate + AMP + diphosphate + H(+). It participates in cofactor biosynthesis; (R)-pantothenate biosynthesis; (R)-pantothenate from (R)-pantoate and beta-alanine: step 1/1. Functionally, catalyzes the condensation of pantoate with beta-alanine in an ATP-dependent reaction via a pantoyl-adenylate intermediate. In Bacteroides thetaiotaomicron (strain ATCC 29148 / DSM 2079 / JCM 5827 / CCUG 10774 / NCTC 10582 / VPI-5482 / E50), this protein is Pantothenate synthetase.